The sequence spans 589 residues: Enhancer of polycomb-like protein 1 (589 aa).

4 disordered regions span residues glycine 298–glutamate 339, methionine 403–proline 430, leucine 468–valine 497, and leucine 516–serine 589. Residues aspartate 474–glutamine 487 show a composition bias toward basic and acidic residues. Positions proline 557 to proline 566 are enriched in low complexity. Residues leucine 567–serine 589 are compositionally biased toward pro residues.

Belongs to the enhancer of polycomb family. In terms of assembly, component of the NuA4 histone acetyltransferase complex.

The protein resides in the nucleus. Its function is as follows. Component of the NuA4 histone acetyltransferase complex which is involved in transcriptional activation of selected genes principally by acetylation of nucleosomal histone H4 and H2A. The NuA4 complex is also involved in DNA repair. Involved in gene silencing by neighboring heterochromatin, blockage of the silencing spreading along the chromosome, and required for cell cycle progression through G2/M. This is Enhancer of polycomb-like protein 1 (epl-1) from Neurospora crassa (strain ATCC 24698 / 74-OR23-1A / CBS 708.71 / DSM 1257 / FGSC 987).